Consider the following 209-residue polypeptide: MESIVFNVEPRDCDKNAAKKLRDQGKVPAVVYHKGEETIHICVDERSLKKLVHSSESHLIDLTFPDGKEKRSFLKEVQFDPVTDKIIHADFQFFSAGEVLEMDVPTTFIGEGEAPGVVAGGNVQVILHSLKVKAVPSNIPQHITIDVSGMELGQTMHIREIPVETYEGKFEIISDPDSSVVSIVAPKVEAEVIESEEEEETPAVASEEE.

It belongs to the bacterial ribosomal protein bL25 family. CTC subfamily. In terms of assembly, part of the 50S ribosomal subunit; part of the 5S rRNA/L5/L18/L25 subcomplex. Contacts the 5S rRNA. Binds to the 5S rRNA independently of L5 and L18.

In terms of biological role, this is one of the proteins that binds to the 5S RNA in the ribosome where it forms part of the central protuberance. This Chlorobium phaeobacteroides (strain BS1) protein is Large ribosomal subunit protein bL25.